The sequence spans 271 residues: Serine O-acetyltransferase (271 aa).

Cys-112 (acyl-thioester intermediate) is an active-site residue. His-204 (proton acceptor) is an active-site residue. Glu-206 is a catalytic residue.

Belongs to the MetA family.

The enzyme catalyses L-serine + acetyl-CoA = O-acetyl-L-serine + CoA. The protein operates within amino-acid biosynthesis; L-cysteine biosynthesis; L-cysteine from L-serine: step 1/2. In terms of biological role, catalyzes the formation of O-acetylserine (OAS) from L-serine and acetyl-CoA. To a lesser extent, is also able to use succinyl-CoA and propionyl-CoA as acyl donors, but not butyryl-CoA. Does not acylate D-serine and L-homoserine. The sequence is that of Serine O-acetyltransferase from Lacticaseibacillus casei (Lactobacillus casei).